We begin with the raw amino-acid sequence, 212 residues long: dITP/XTP pyrophosphatase (212 aa).

7 to 12 provides a ligand contact to substrate; the sequence is SRNKKK. Asp72 serves as the catalytic Proton acceptor. Asp72 provides a ligand contact to Mg(2+). Residues Ser73, 163-166, Lys187, and 192-193 each bind substrate; these read FGYD and HR. A disordered region spans residues 164–194; the sequence is GYDPLFEPAEAPGQSSAELTPERKDELSHRG. Positions 183-192 are enriched in basic and acidic residues; sequence TPERKDELSH.

It belongs to the HAM1 NTPase family. As to quaternary structure, homodimer. Requires Mg(2+) as cofactor.

The enzyme catalyses XTP + H2O = XMP + diphosphate + H(+). It catalyses the reaction dITP + H2O = dIMP + diphosphate + H(+). The catalysed reaction is ITP + H2O = IMP + diphosphate + H(+). Functionally, pyrophosphatase that catalyzes the hydrolysis of nucleoside triphosphates to their monophosphate derivatives, with a high preference for the non-canonical purine nucleotides XTP (xanthosine triphosphate), dITP (deoxyinosine triphosphate) and ITP. Seems to function as a house-cleaning enzyme that removes non-canonical purine nucleotides from the nucleotide pool, thus preventing their incorporation into DNA/RNA and avoiding chromosomal lesions. The sequence is that of dITP/XTP pyrophosphatase from Corynebacterium urealyticum (strain ATCC 43042 / DSM 7109).